The chain runs to 299 residues: Ethylmalonyl-CoA decarboxylase (299 aa).

The protein belongs to the enoyl-CoA hydratase/isomerase family.

The protein resides in the cytoplasm. It is found in the cytosol. The catalysed reaction is (2S)-ethylmalonyl-CoA + H(+) = butanoyl-CoA + CO2. The enzyme catalyses (S)-methylmalonyl-CoA + H(+) = propanoyl-CoA + CO2. It catalyses the reaction (2R)-ethylmalonyl-CoA + H(+) = butanoyl-CoA + CO2. Decarboxylates ethylmalonyl-CoA, a potentially toxic metabolite, to form butyryl-CoA, suggesting it might be involved in metabolite proofreading. Acts preferentially on (S)-ethylmalonyl-CoA but also has some activity on the (R)-isomer. Also has methylmalonyl-CoA decarboxylase activity at lower level. This is Ethylmalonyl-CoA decarboxylase (echdc1) from Xenopus laevis (African clawed frog).